The following is an 818-amino-acid chain: ATM interactor (818 aa).

Positions 1 to 34 (MAATEAAAADSAGPAPGVPATPASTRGAAAASSP) are enriched in low complexity. The interval 1–62 (MAATEAAAAD…RAAAPVPPAR (62 aa)) is disordered. The segment at 80–105 (ILCTVRGCGKILPNSPALNMHLVKSH) adopts a C2H2-type 1 zinc-finger fold. Residues 161–181 (HKCSKCSNSYGTEWDLKRHEE) form a C2H2-type 2; degenerate zinc finger. The span at 210–221 (HEIPAEHRDPPS) shows a compositional bias: basic and acidic residues. Disordered regions lie at residues 210–284 (HEIP…ATPP) and 603–625 (DNRS…GSAQ). Residues 219–437 (PPSKKRKMES…PDSSVSSCSQ (219 aa)) are required for formation of RAD51 foci. 2 stretches are compositionally biased toward polar residues: residues 229-243 (YLQN…TEPL) and 603-612 (DNRSLLSDTN).

As to quaternary structure, interacts via its C-terminus with ATM. Interacts with DYNLL; this interaction inhibits ATMIN transcriptional activity and hence may play a role in a feedback loop whereby DYNLL1 inhibits transactivation of its own promoter by ATMIN. ATMIN.

It localises to the nucleus. Functionally, transcription factor. Plays a crucial role in cell survival and RAD51 foci formation in response to methylating DNA damage. Involved in regulating the activity of ATM in the absence of DNA damage. May play a role in stabilizing ATM. Binds to the DYNLL1 promoter and activates its transcription. The polypeptide is ATM interactor (Mus musculus (Mouse)).